The chain runs to 271 residues: GPN-loop GTPase 3 (271 aa).

13–18 (GAGKST) serves as a coordination point for GTP. The Gly-Pro-Asn (GPN)-loop; involved in dimer interface signature appears at 70-72 (GPN). 173–176 (SKLD) provides a ligand contact to GTP.

Belongs to the GPN-loop GTPase family. As to quaternary structure, heterodimers with GPN1 or GPN2. Binds to RNA polymerase II (RNAPII).

In terms of biological role, small GTPase required for proper nuclear import of RNA polymerase II and III (RNAPII and RNAPIII). May act at an RNAP assembly step prior to nuclear import. This chain is GPN-loop GTPase 3, found in Candida glabrata (strain ATCC 2001 / BCRC 20586 / JCM 3761 / NBRC 0622 / NRRL Y-65 / CBS 138) (Yeast).